Consider the following 352-residue polypeptide: Chorismate synthase (352 aa).

Residue Arg48 coordinates NADP(+). FMN is bound by residues 125–127 (RSS), 238–239 (NA), Gly278, 293–297 (KPTSS), and Arg319.

The protein belongs to the chorismate synthase family. In terms of assembly, homotetramer. Requires FMNH2 as cofactor.

The enzyme catalyses 5-O-(1-carboxyvinyl)-3-phosphoshikimate = chorismate + phosphate. Its pathway is metabolic intermediate biosynthesis; chorismate biosynthesis; chorismate from D-erythrose 4-phosphate and phosphoenolpyruvate: step 7/7. In terms of biological role, catalyzes the anti-1,4-elimination of the C-3 phosphate and the C-6 proR hydrogen from 5-enolpyruvylshikimate-3-phosphate (EPSP) to yield chorismate, which is the branch point compound that serves as the starting substrate for the three terminal pathways of aromatic amino acid biosynthesis. This reaction introduces a second double bond into the aromatic ring system. The chain is Chorismate synthase from Legionella pneumophila subsp. pneumophila (strain Philadelphia 1 / ATCC 33152 / DSM 7513).